A 283-amino-acid chain; its full sequence is Bifunctional protein FolD 2 (283 aa).

NADP(+) contacts are provided by residues 165-167 (GRG), Thr-192, and Val-233.

The protein belongs to the tetrahydrofolate dehydrogenase/cyclohydrolase family. As to quaternary structure, homodimer.

It carries out the reaction (6R)-5,10-methylene-5,6,7,8-tetrahydrofolate + NADP(+) = (6R)-5,10-methenyltetrahydrofolate + NADPH. The catalysed reaction is (6R)-5,10-methenyltetrahydrofolate + H2O = (6R)-10-formyltetrahydrofolate + H(+). It functions in the pathway one-carbon metabolism; tetrahydrofolate interconversion. Functionally, catalyzes the oxidation of 5,10-methylenetetrahydrofolate to 5,10-methenyltetrahydrofolate and then the hydrolysis of 5,10-methenyltetrahydrofolate to 10-formyltetrahydrofolate. The sequence is that of Bifunctional protein FolD 2 from Nocardioides sp. (strain ATCC BAA-499 / JS614).